A 364-amino-acid chain; its full sequence is Paraneoplastic antigen Ma2 homolog (364 aa).

At Ala2 the chain carries N-acetylalanine. Residues 335–351 show a composition bias toward acidic residues; the sequence is EEEEATFENENTEEPEG. Positions 335–364 are disordered; it reads EEEEATFENENTEEPEGGDGYGHWGNEAND.

The protein belongs to the PNMA family.

It is found in the nucleus. It localises to the nucleolus. In Bos taurus (Bovine), this protein is Paraneoplastic antigen Ma2 homolog (PNMA2).